Here is a 699-residue protein sequence, read N- to C-terminus: SPS-sensor serine protease component SSY5 (699 aa).

2 disordered regions span residues 1 to 113 (MVRF…LQGF) and 129 to 158 (VKEEESQDTQNTLDVSSSTSSTLATSGNAR). Residues 1–381 (MVRFFGLNKE…YCVKDYIKKA (381 aa)) constitute a propeptide that is removed on maturation. The span at 8-18 (NKEKNEEKENT) shows a compositional bias: basic and acidic residues. Positions 24–38 (NEQNAAETSSSNVSG) are enriched in polar residues. The span at 39-51 (NEERIDPNSRDTN) shows a compositional bias: basic and acidic residues. The span at 61-78 (STTFGSSIQSSSIFSRGR) shows a compositional bias: low complexity. A compositionally biased stretch (polar residues) spans 83-93 (TGASSSMATSE). Positions 144 to 154 (SSSTSSTLATS) are enriched in low complexity. The serine protease stretch occupies residues 459 to 699 (FAITCAHVVL…QWDIDPQLDG (241 aa)). Catalysis depends on charge relay system residues His465, Asp545, and Ser640.

It belongs to the peptidase S64 family. In terms of assembly, component of the plasma membrane SPS (SSY1-PTR3-SSY5) amino acid sensor complex. In terms of processing, the propeptide is autoproteolytically cleaved from the catalytic domain but remains associated, forming an inactive protease complex. This processing occurs even in the absence of signaling.

It is found in the cell membrane. Functionally, protease component of the SPS-sensor system, which regulates the expression of several amino acid-metabolizing enzymes and amino acid- and peptide-permeases in response to extracellular amino acid levels by controlling the activity of two transcription factors, STP1 and STP2. Catalyzes the activation of these transcription factors, which are synthesized as latent cytoplasmic precursors, by proteolytic removal of an N-terminal inhibitory domain containing cytoplasmic retention motifs. SSY5 binds as an inactive protease complex to STP1. In response to extracellular amino acids and dependent on the other SPS-sensor components, the inhibitory propeptide is induced to dissociate, and thereby enables the catalytic domain to process STP1. In Saccharomyces cerevisiae (strain AWRI1631) (Baker's yeast), this protein is SPS-sensor serine protease component SSY5 (SSY5).